The primary structure comprises 341 residues: Anthranilate phosphoribosyltransferase (341 aa).

5-phospho-alpha-D-ribose 1-diphosphate is bound by residues Gly79, 82 to 83 (GD), Thr87, 89 to 92 (NIST), 107 to 115 (KHGNRAASS), and Ala119. Position 79 (Gly79) interacts with anthranilate. Ser91 lines the Mg(2+) pocket. Position 110 (Asn110) interacts with anthranilate. Position 165 (Arg165) interacts with anthranilate. Mg(2+)-binding residues include Asp224 and Glu225.

It belongs to the anthranilate phosphoribosyltransferase family. Homodimer. The cofactor is Mg(2+).

The enzyme catalyses N-(5-phospho-beta-D-ribosyl)anthranilate + diphosphate = 5-phospho-alpha-D-ribose 1-diphosphate + anthranilate. It functions in the pathway amino-acid biosynthesis; L-tryptophan biosynthesis; L-tryptophan from chorismate: step 2/5. Catalyzes the transfer of the phosphoribosyl group of 5-phosphorylribose-1-pyrophosphate (PRPP) to anthranilate to yield N-(5'-phosphoribosyl)-anthranilate (PRA). The protein is Anthranilate phosphoribosyltransferase of Lacticaseibacillus casei (strain BL23) (Lactobacillus casei).